We begin with the raw amino-acid sequence, 336 residues long: Retinol dehydrogenase 10-B (336 aa).

Residues L7–I27 form a helical; Signal-anchor membrane-spanning segment. NADP(+) is bound at residue V40–V64. Residue S192 participates in substrate binding. The active-site Proton acceptor is the Y205.

The protein belongs to the short-chain dehydrogenases/reductases (SDR) family.

Its subcellular location is the microsome membrane. It is found in the endoplasmic reticulum membrane. The enzyme catalyses all-trans-retinol + NADP(+) = all-trans-retinal + NADPH + H(+). It participates in cofactor metabolism; retinol metabolism. Functionally, retinol dehydrogenase with a clear preference for NADP. Converts all-trans-retinol to all-trans-retinal. Has no detectable activity towards 11-cis-retinol, 9-cis-retinol and 13-cis-retinol. This Danio rerio (Zebrafish) protein is Retinol dehydrogenase 10-B (rdh10b).